The primary structure comprises 264 residues: 3-methyl-2-oxobutanoate hydroxymethyltransferase (264 aa).

Asp45 and Asp84 together coordinate Mg(2+). 3-methyl-2-oxobutanoate is bound by residues 45 to 46 (DS), Asp84, and Lys112. Residue Glu114 coordinates Mg(2+). Glu181 acts as the Proton acceptor in catalysis.

The protein belongs to the PanB family. Homodecamer; pentamer of dimers. It depends on Mg(2+) as a cofactor.

It localises to the cytoplasm. It catalyses the reaction 3-methyl-2-oxobutanoate + (6R)-5,10-methylene-5,6,7,8-tetrahydrofolate + H2O = 2-dehydropantoate + (6S)-5,6,7,8-tetrahydrofolate. It participates in cofactor biosynthesis; (R)-pantothenate biosynthesis; (R)-pantoate from 3-methyl-2-oxobutanoate: step 1/2. In terms of biological role, catalyzes the reversible reaction in which hydroxymethyl group from 5,10-methylenetetrahydrofolate is transferred onto alpha-ketoisovalerate to form ketopantoate. This chain is 3-methyl-2-oxobutanoate hydroxymethyltransferase, found in Shewanella sp. (strain ANA-3).